Consider the following 524-residue polypeptide: Maturase K (524 aa).

It belongs to the intron maturase 2 family. MatK subfamily.

It localises to the plastid. Its subcellular location is the chloroplast. Usually encoded in the trnK tRNA gene intron. Probably assists in splicing its own and other chloroplast group II introns. This Welwitschia mirabilis (Tree tumbo) protein is Maturase K.